The following is a 515-amino-acid chain: Gamma aminobutyrate transaminase 1, mitochondrial (515 aa).

The transit peptide at 1-57 (MAKISRLFGSTVKAAITAQAGFHGKRIPAVSSLQEHIVKSTPARYNSTQACLENDIS) directs the protein to the mitochondrion. A pyridoxal 5'-phosphate-binding site is contributed by 172–173 (GS). Substrate is bound at residue Tyr205. A pyridoxal 5'-phosphate-binding site is contributed by Asp312. Lys341 is a binding site for substrate. Lys341 bears the N6-(pyridoxal phosphate)lysine mark.

The protein belongs to the class-III pyridoxal-phosphate-dependent aminotransferase family. As to expression, expressed in leaves, roots, stems, flowers and fruits.

The protein resides in the mitochondrion. It carries out the reaction 4-aminobutanoate + pyruvate = succinate semialdehyde + L-alanine. It catalyses the reaction 4-aminobutanoate + glyoxylate = succinate semialdehyde + glycine. Its function is as follows. Transaminase that degrades gamma-amino butyric acid (GABA) and uses pyruvate or glyoxylate as amino-group acceptor. Cannot use beta-alanine, ornithine, acetylornithine, serine, glycine, asparagine, glutamine, glutamate, valine, leucine, isoleucine, methionine, phenylalanine, histidine, lysine, arginine, aspartate, threonine, tyrosine, tryptophan, proline, or cysteine as amino donors. Acts predominantly in vegetative tissues. This is Gamma aminobutyrate transaminase 1, mitochondrial (GABA-TP1) from Solanum lycopersicum (Tomato).